The sequence spans 742 residues: MKDDFAEEEEVQSFGYKRFGIQEGTQCTKCKNNWALKFSIILLYVLCALLTITVAILGYKVVEKMDTVTDGMETSRQTYDNKLIAVESDLKKLGDQTGKKALSTNSELSTFRSDILDLRQQLQEITEKTSKNKDMLEKLQANGDSLVDRQSQLKETLQNNSFLITTVNKTLQAYNGYVTNLQQDTSVLQGNLQSQMYSQNVVIMNLNNLNLTQVQQRNLITNLQRSVDDTSLAIQQIKNDFQNLQQVFLQAKKDTDWLKEKVQSLQTLAANNSALAKANNDTLEDMNNQLSSFTGQMDNITTISQANEQSMKDLQDLHKDTENRTAVKFSQLEERFQVFETDIVNIINNISYTAHHLRTLTSNLNDVRTTCTDTLTRHTDDLTSLNNTLVNIRLDSISLRMQQDMMRSRLDTEVANLSVVMEEMKLVDSKHGQLIKNFTILQGPPGPRGPKGDRGSQGPPGPTGNKGQKGEKGEPGPPGPAGERGTIGPVGPPGERGSKGSKGSQGPKGSRGSPGKPGPQGPSGDPGPPGPPGKDGLPGPQGPPGFQGLQGTVGEPGVPGPRGLPGLPGVPGMPGPKGPPGPPGPSGAMEPLALQNEPTPASEVNGCPPHWKNFTDKCYYFSVEKEIFEDAKLFCEDKSSHLVFINSREEQQWIKKQTMGRESHWIGLTDSEQESEWKWLDGTPVDYKNWKAGQPDNWGSGHGPGEDCAGLIYAGQWNDFQCDEINNFICEKEREAVPSSIL.

At 1–37 (MKDDFAEEEEVQSFGYKRFGIQEGTQCTKCKNNWALK) the chain is on the cytoplasmic side. A helical; Signal-anchor for type II membrane protein membrane pass occupies residues 38–58 (FSIILLYVLCALLTITVAILG). Topologically, residues 59 to 742 (YKVVEKMDTV…EREAVPSSIL (684 aa)) are extracellular. Residues 104–142 (TNSELSTFRSDILDLRQQLQEITEKTSKNKDMLEKLQAN) are a coiled coil. N-linked (GlcNAc...) asparagine glycans are attached at residues N159, N168, and N271. Residues 220–301 (ITNLQRSVDD…SFTGQMDNIT (82 aa)) are a coiled coil. The segment at 439–608 (TILQGPPGPR…TPASEVNGCP (170 aa)) is disordered. Collagen-like domains lie at 452–511 (GDRG…KGSR) and 527–586 (GPPG…PGPS). Low complexity predominate over residues 501 to 514 (SKGSQGPKGSRGSP). Residues 516 to 532 (KPGPQGPSGDPGPPGPP) show a composition bias toward pro residues. Residues 534-556 (KDGLPGPQGPPGFQGLQGTVGEP) are compositionally biased toward low complexity. The segment covering 571–585 (PGMPGPKGPPGPPGP) has biased composition (pro residues). 3 disulfide bridges follow: C607/C618, C635/C730, and C708/C722. The C-type lectin domain occupies 614 to 731 (FTDKCYYFSV…CDEINNFICE (118 aa)). Ca(2+) contacts are provided by F644, N646, E650, D670, and E674. A carbohydrate-binding residues include K691, Q694, and D696. Residues Q694, D696, N697, E706, D707, N718, D719, and E731 each coordinate Ca(2+). E706 serves as a coordination point for a carbohydrate. The a carbohydrate site is built by N718 and D719.

As to quaternary structure, the extracellular domain forms a stable trimer. The extracellular domain interacts with fibrillar amyloid-beta peptide. Highly expressed in lung, spleen, small and large intestine, stomach and brain. Expressed in neonatal microglia.

Its subcellular location is the membrane. Its function is as follows. Scavenger receptor that displays several functions associated with host defense. Promotes binding and phagocytosis of Gram-positive, Gram-negative bacteria and yeast. Mediates the recognition, internalization and degradation of oxidatively modified low density lipoprotein (oxLDL) by vascular endothelial cells. Binds to several carbohydrates including Gal-type ligands, D-galactose, L- and D-fucose, GalNAc, T and Tn antigens in a calcium-dependent manner and internalizes specifically GalNAc in nurse-like cells. Also binds to sialyl Lewis X or a trisaccharide and asialo-orosomucoid (ASOR). The sequence is that of Collectin-12 (Colec12) from Rattus norvegicus (Rat).